A 521-amino-acid chain; its full sequence is Interleukin-9 receptor (521 aa).

The N-terminal stretch at Met1 to Val40 is a signal peptide. At Ser41 to Pro270 the chain is on the extracellular side. N-linked (GlcNAc...) asparagine glycosylation is found at Asn117 and Asn156. Residues Pro149–Arg259 form the Fibronectin type-III domain. A WSXWS motif motif is present at residues Trp245–Ser249. Residues Gly271–Phe291 form a helical membrane-spanning segment. Residues Lys292–Phe521 are Cytoplasmic-facing. The Box 1 motif signature appears at Phe301–Ala309. The disordered stretch occupies residues Trp413–Asn439. Positions Ser429–Asn439 are enriched in low complexity.

The protein belongs to the type I cytokine receptor family. Type 4 subfamily. As to quaternary structure, interacts with IL9.

The protein localises to the cell membrane. The protein resides in the secreted. In terms of biological role, plays an important role in the immune response against parasites by acting as a receptor of IL9. The protein is Interleukin-9 receptor (IL9R) of Homo sapiens (Human).